Here is a 130-residue protein sequence, read N- to C-terminus: Glycine cleavage system H protein (130 aa).

Positions 24-106 (IYSVGITEHA…YTDGWLFRIK (83 aa)) constitute a Lipoyl-binding domain. An N6-lipoyllysine modification is found at Lys65.

Belongs to the GcvH family. As to quaternary structure, the glycine cleavage system is composed of four proteins: P, T, L and H. (R)-lipoate is required as a cofactor.

Functionally, the glycine cleavage system catalyzes the degradation of glycine. The H protein shuttles the methylamine group of glycine from the P protein to the T protein. The sequence is that of Glycine cleavage system H protein from Pectobacterium atrosepticum (strain SCRI 1043 / ATCC BAA-672) (Erwinia carotovora subsp. atroseptica).